Here is a 565-residue protein sequence, read N- to C-terminus: Adenine deaminase (565 aa).

The protein belongs to the metallo-dependent hydrolases superfamily. Adenine deaminase family. Requires Mn(2+) as cofactor.

The enzyme catalyses adenine + H2O + H(+) = hypoxanthine + NH4(+). The sequence is that of Adenine deaminase from Cereibacter sphaeroides (strain ATCC 17023 / DSM 158 / JCM 6121 / CCUG 31486 / LMG 2827 / NBRC 12203 / NCIMB 8253 / ATH 2.4.1.) (Rhodobacter sphaeroides).